The sequence spans 245 residues: Geranylgeranylglyceryl phosphate synthase (245 aa).

Mg(2+) contacts are provided by Asp-24 and Ser-54. Residues Tyr-172–Gly-178, Gly-203–Gly-204, and Gly-225–Thr-226 contribute to the sn-glycerol 1-phosphate site.

This sequence belongs to the GGGP/HepGP synthase family. Group II subfamily. Mg(2+) is required as a cofactor.

It localises to the cytoplasm. The enzyme catalyses sn-glycerol 1-phosphate + (2E,6E,10E)-geranylgeranyl diphosphate = sn-3-O-(geranylgeranyl)glycerol 1-phosphate + diphosphate. Its pathway is membrane lipid metabolism; glycerophospholipid metabolism. Functionally, prenyltransferase that catalyzes the transfer of the geranylgeranyl moiety of geranylgeranyl diphosphate (GGPP) to the C3 hydroxyl of sn-glycerol-1-phosphate (G1P). This reaction is the first ether-bond-formation step in the biosynthesis of archaeal membrane lipids. The polypeptide is Geranylgeranylglyceryl phosphate synthase (Staphylothermus marinus (strain ATCC 43588 / DSM 3639 / JCM 9404 / F1)).